The primary structure comprises 168 residues: Putative B3 domain-containing protein Os10g0158600 (168 aa).

Residues 4-97 (VVFASARLNA…KARVMLLNRQ (94 aa)) constitute a DNA-binding region (TF-B3). The tract at residues 105 to 151 (KTPSTTSSDKNRSLSPSDQLTRASTSAHPSTSKSIPPLRNGTGSTKR) is disordered. Over residues 106-138 (TPSTTSSDKNRSLSPSDQLTRASTSAHPSTSKS) the composition is skewed to polar residues.

It is found in the nucleus. This Oryza sativa subsp. japonica (Rice) protein is Putative B3 domain-containing protein Os10g0158600.